The chain runs to 178 residues: Translation initiation factor IF-3 (178 aa).

The tract at residues 1 to 20 (MRRPFRATPVQKDGPRSNRD) is disordered.

The protein belongs to the IF-3 family. As to quaternary structure, monomer.

It localises to the cytoplasm. Its function is as follows. IF-3 binds to the 30S ribosomal subunit and shifts the equilibrium between 70S ribosomes and their 50S and 30S subunits in favor of the free subunits, thus enhancing the availability of 30S subunits on which protein synthesis initiation begins. This is Translation initiation factor IF-3 from Brucella abortus biovar 1 (strain 9-941).